The following is a 393-amino-acid chain: Lipid-A-disaccharide synthase (393 aa).

The protein belongs to the LpxB family.

The catalysed reaction is a lipid X + a UDP-2-N,3-O-bis[(3R)-3-hydroxyacyl]-alpha-D-glucosamine = a lipid A disaccharide + UDP + H(+). Its pathway is bacterial outer membrane biogenesis; LPS lipid A biosynthesis. Its function is as follows. Condensation of UDP-2,3-diacylglucosamine and 2,3-diacylglucosamine-1-phosphate to form lipid A disaccharide, a precursor of lipid A, a phosphorylated glycolipid that anchors the lipopolysaccharide to the outer membrane of the cell. The sequence is that of Lipid-A-disaccharide synthase from Actinobacillus pleuropneumoniae serotype 7 (strain AP76).